Consider the following 262-residue polypeptide: Thiazole synthase (262 aa).

The active-site Schiff-base intermediate with DXP is K97. Residues G158, 185–186 (AG), and 207–208 (NT) each bind 1-deoxy-D-xylulose 5-phosphate. Residues 243-262 (DKAQASTPTVGQPFWHSAEY) are disordered.

This sequence belongs to the ThiG family. As to quaternary structure, homotetramer. Forms heterodimers with either ThiH or ThiS.

The protein localises to the cytoplasm. The enzyme catalyses [ThiS sulfur-carrier protein]-C-terminal-Gly-aminoethanethioate + 2-iminoacetate + 1-deoxy-D-xylulose 5-phosphate = [ThiS sulfur-carrier protein]-C-terminal Gly-Gly + 2-[(2R,5Z)-2-carboxy-4-methylthiazol-5(2H)-ylidene]ethyl phosphate + 2 H2O + H(+). It participates in cofactor biosynthesis; thiamine diphosphate biosynthesis. Functionally, catalyzes the rearrangement of 1-deoxy-D-xylulose 5-phosphate (DXP) to produce the thiazole phosphate moiety of thiamine. Sulfur is provided by the thiocarboxylate moiety of the carrier protein ThiS. In vitro, sulfur can be provided by H(2)S. This Neisseria meningitidis serogroup C (strain 053442) protein is Thiazole synthase.